The chain runs to 1192 residues: Methionine synthase (1192 aa).

Positions 1-312 (MTAADKHLYD…AHIREVAAAV (312 aa)) constitute a Hcy-binding domain. Zn(2+) contacts are provided by Cys-231, Cys-297, and Cys-298. The Pterin-binding domain occupies 343 to 601 (VLVIGERTNA…RIPEEQRNVA (259 aa)). Positions 635-728 (RLAELAGLPL…HMERSDDDSG (94 aa)) constitute a B12-binding N-terminal domain. The B12-binding domain maps to 729–866 (KGRIVLATVK…SAKRGEAPDE (138 aa)). Methylcob(III)alamin-binding positions include 739-743 (GDVHD), His-742, Ser-787, and Ala-845. Positions 860 to 904 (RGEAPDENSPEAIKAREKEAERKARHQRSKRIAAQRKAAEEPVEV) are disordered. Positions 872–881 (IKAREKEAER) are enriched in basic and acidic residues. Basic residues predominate over residues 882 to 893 (KARHQRSKRIAA). An AdoMet activation domain is found at 893 to 1192 (AQRKAAEEPV…HHPEAKYFNV (300 aa)). S-adenosyl-L-methionine is bound by residues Asp-940, Arg-1135, and 1189–1190 (YF).

This sequence belongs to the vitamin-B12 dependent methionine synthase family. Methylcob(III)alamin serves as cofactor. Zn(2+) is required as a cofactor.

It catalyses the reaction (6S)-5-methyl-5,6,7,8-tetrahydrofolate + L-homocysteine = (6S)-5,6,7,8-tetrahydrofolate + L-methionine. The protein operates within amino-acid biosynthesis; L-methionine biosynthesis via de novo pathway; L-methionine from L-homocysteine (MetH route): step 1/1. Catalyzes the transfer of a methyl group from methyl-cobalamin to homocysteine, yielding enzyme-bound cob(I)alamin and methionine. Subsequently, remethylates the cofactor using methyltetrahydrofolate. The polypeptide is Methionine synthase (metH) (Mycobacterium tuberculosis (strain ATCC 25618 / H37Rv)).